A 125-amino-acid polypeptide reads, in one-letter code: Large ribosomal subunit protein bL20 (125 aa).

The protein belongs to the bacterial ribosomal protein bL20 family.

Binds directly to 23S ribosomal RNA and is necessary for the in vitro assembly process of the 50S ribosomal subunit. It is not involved in the protein synthesizing functions of that subunit. The chain is Large ribosomal subunit protein bL20 from Thermobifida fusca (strain YX).